A 352-amino-acid polypeptide reads, in one-letter code: Adenosine deaminase (352 aa).

Position 2 is an N-acetylalanine (alanine 2). Positions 15 and 17 each coordinate Zn(2+). Positions 17 and 19 each coordinate substrate. The residue at position 54 (lysine 54) is an N6-acetyllysine. Substrate is bound at residue glycine 184. Histidine 214 is a Zn(2+) binding site. Glutamate 217 functions as the Proton donor in the catalytic mechanism. Lysine 232 is subject to N6-acetyllysine. Aspartate 295 contributes to the Zn(2+) binding site. Aspartate 296 contacts substrate.

It belongs to the metallo-dependent hydrolases superfamily. Adenosine and AMP deaminases family. In terms of assembly, interacts with DPP4 (via extracellular domain). Interacts with PLG (via Kringle 4 domain); the interaction stimulates PLG activation when in complex with DPP4. Zn(2+) is required as a cofactor. In terms of tissue distribution, detected in brain neurons in the median emninence (at protein level). Expressed in secondary deciduum (at protein level). Found in all tissues, occurs in large amounts in T-lymphocytes and, at the time of weaning, in gastrointestinal tissues.

The protein resides in the cell membrane. The protein localises to the cell junction. It is found in the cytoplasmic vesicle lumen. It localises to the cytoplasm. Its subcellular location is the lysosome. It carries out the reaction adenosine + H2O + H(+) = inosine + NH4(+). The catalysed reaction is 2'-deoxyadenosine + H2O + H(+) = 2'-deoxyinosine + NH4(+). The enzyme catalyses cordycepin + H2O + H(+) = 3'-deoxyinosine + NH4(+). Catalyzes the hydrolytic deamination of adenosine and 2-deoxyadenosine. Plays an important role in purine metabolism and in adenosine homeostasis. Modulates signaling by extracellular adenosine, and so contributes indirectly to cellular signaling events. Acts as a positive regulator of T-cell coactivation, by binding DPP4. Its interaction with DPP4 regulates lymphocyte-epithelial cell adhesion. Enhances dendritic cell immunogenicity by affecting dendritic cell costimulatory molecule expression and cytokines and chemokines secretion. Enhances CD4+ T-cell differentiation and proliferation. Acts as a positive modulator of adenosine receptors ADORA1 and ADORA2A, by enhancing their ligand affinity via conformational change. Stimulates plasminogen activation. Plays a role in male fertility. Plays a protective role in early postimplantation embryonic development. Also responsible for the deamination of cordycepin (3'-deoxyadenosine), a fungal natural product that shows antitumor, antibacterial, antifungal, antivirus, and immune regulation properties. This is Adenosine deaminase (Ada) from Mus musculus (Mouse).